The sequence spans 1368 residues: DNA-directed RNA polymerase subunit beta (1368 aa).

It belongs to the RNA polymerase beta chain family. As to quaternary structure, the RNAP catalytic core consists of 2 alpha, 1 beta, 1 beta' and 1 omega subunit. When a sigma factor is associated with the core the holoenzyme is formed, which can initiate transcription.

It catalyses the reaction RNA(n) + a ribonucleoside 5'-triphosphate = RNA(n+1) + diphosphate. Its function is as follows. DNA-dependent RNA polymerase catalyzes the transcription of DNA into RNA using the four ribonucleoside triphosphates as substrates. The protein is DNA-directed RNA polymerase subunit beta of Cupriavidus necator (strain ATCC 17699 / DSM 428 / KCTC 22496 / NCIMB 10442 / H16 / Stanier 337) (Ralstonia eutropha).